The primary structure comprises 314 residues: Homoserine O-acetyltransferase (314 aa).

C142 functions as the Acyl-thioester intermediate in the catalytic mechanism. Substrate contacts are provided by K163 and S192. The active-site Proton acceptor is the H235. E237 is an active-site residue. Residue R249 participates in substrate binding.

Belongs to the MetA family.

The protein localises to the cytoplasm. It carries out the reaction L-homoserine + acetyl-CoA = O-acetyl-L-homoserine + CoA. It functions in the pathway amino-acid biosynthesis; L-methionine biosynthesis via de novo pathway; O-acetyl-L-homoserine from L-homoserine: step 1/1. Transfers an acetyl group from acetyl-CoA to L-homoserine, forming acetyl-L-homoserine. The chain is Homoserine O-acetyltransferase from Streptococcus mutans serotype c (strain ATCC 700610 / UA159).